The primary structure comprises 352 residues: NADH-ubiquinone oxidoreductase chain 2 (352 aa).

The next 11 membrane-spanning stretches (helical) occupy residues 4–24 (MISI…VSAE), 26–46 (WFVI…ILWF), 60–80 (FLVQ…QAWF), 96–116 (LCLS…FWLP), 124–144 (FIQG…LLFY), 150–170 (FSYF…WGGL), 178–198 (ILAF…AFSL), 205–225 (LFIY…LSIF), 241–261 (ITLV…TGFI), 274–294 (GFIF…FFYL), and 330–350 (LVSS…PLYI).

It belongs to the complex I subunit 2 family.

The protein resides in the mitochondrion inner membrane. It catalyses the reaction a ubiquinone + NADH + 5 H(+)(in) = a ubiquinol + NAD(+) + 4 H(+)(out). Its function is as follows. Core subunit of the mitochondrial membrane respiratory chain NADH dehydrogenase (Complex I) that is believed to belong to the minimal assembly required for catalysis. Complex I functions in the transfer of electrons from NADH to the respiratory chain. The immediate electron acceptor for the enzyme is believed to be ubiquinone. This Paracentrotus lividus (Common sea urchin) protein is NADH-ubiquinone oxidoreductase chain 2 (ND2).